We begin with the raw amino-acid sequence, 68 residues long: Large ribosomal subunit protein uL30 (68 aa).

This sequence belongs to the universal ribosomal protein uL30 family. As to quaternary structure, part of the 50S ribosomal subunit.

This is Large ribosomal subunit protein uL30 from Bartonella henselae (strain ATCC 49882 / DSM 28221 / CCUG 30454 / Houston 1) (Rochalimaea henselae).